We begin with the raw amino-acid sequence, 495 residues long: Internal alternative NAD(P)H-ubiquinone oxidoreductase A1, mitochondrial (495 aa).

The transit peptide at 1 to 41 (MPWFKNLIKISKTITNQSSSYKSITPLASPLLAQFLQFTKQ) directs the protein to the mitochondrion. Residue 61–91 (RIVVLGSGWAGCRLMKDIDTNIYDVVCVSPR) participates in FAD binding. 228 to 264 (LHCVVVGGGPTGVEFSGELSDFILKDVHQRYAHVKDY) lines the NAD(+) pocket. The Microbody targeting signal motif lies at 486–495 (LVFGRDISRI).

It belongs to the NADH dehydrogenase family. FAD is required as a cofactor.

The protein localises to the mitochondrion inner membrane. Its subcellular location is the peroxisome. The catalysed reaction is a quinone + NADH + H(+) = a quinol + NAD(+). It catalyses the reaction a ubiquinone + NADH + H(+) = a ubiquinol + NAD(+). Its function is as follows. Alternative NADH-ubiquinone oxidoreductase which catalyzes the oxidation of mitochondrial NADH does not translocate protons across the inner mitochondrial membrane. The sequence is that of Internal alternative NAD(P)H-ubiquinone oxidoreductase A1, mitochondrial (NDA1) from Solanum tuberosum (Potato).